A 142-amino-acid chain; its full sequence is Hemoglobin subunit alpha (142 aa).

In terms of domain architecture, Globin spans 1–142; the sequence is GLTAADKTLI…VEKALFETYR (142 aa). H59 is a binding site for O2. H88 lines the heme b pocket.

This sequence belongs to the globin family. Heterotetramer of two alpha chains and two beta chains (an easy dimerization is also reported). In terms of tissue distribution, red blood cells.

Functionally, involved in oxygen transport from the lung to the various peripheral tissues. The polypeptide is Hemoglobin subunit alpha (HBA) (Latimeria chalumnae (Coelacanth)).